Reading from the N-terminus, the 1550-residue chain is Cellulose synthase 1 (1550 aa).

Positions 1-741 are catalytic; that stretch reads MPEVRSSTQS…KERVLKGTVK (741 aa). The next 3 helical transmembrane spans lie at 26–46, 47–67, and 106–126; these read GAGL…TSVT, LPPE…FIVG, and GLLG…LFLS. A catalytic subdomain A region spans residues 147 to 240; the sequence is EWPTVDIFVP…YILIFDCDHV (94 aa). Asp-189 is a catalytic residue. The substrate site is built by Asp-236 and Asp-238. The tract at residues 317–377 is catalytic subdomain B; the sequence is TAIEQIGGFA…GQRVRWARGM (61 aa). Asp-333 is a catalytic residue. The next 5 membrane-spanning stretches (helical) occupy residues 398 to 418, 423 to 443, 468 to 488, 507 to 527, and 547 to 567; these read LCYL…IFLS, FLFF…AYAI, VYET…LLSP, FDLG…GGLA, and LLNS…IAVG. The PilZ domain occupies 572–647; that stretch reads QKRNSHRIPA…PARIIRAGNG (76 aa). Disordered regions lie at residues 708 to 731 and 768 to 813; these read VHRS…NPSR and APAH…QPLA. The interval 742 to 1550 is cyclic di-GMP binding domain; the sequence is MVSLLALLTF…KQLEDERRKS (809 aa). Positions 768-796 are enriched in low complexity; the sequence is APAHQPEASDLPPLPALLPATSGAAQAGS. Residues 1513–1533 form a helical membrane-spanning segment; that stretch reads VLLVGLLGCILIVSVLARALA.

It in the N-terminal section; belongs to the glycosyltransferase 2 family. In the C-terminal section; belongs to the AcsB/BcsB family. Mg(2+) serves as cofactor.

Its subcellular location is the cell inner membrane. The catalysed reaction is [(1-&gt;4)-beta-D-glucosyl](n) + UDP-alpha-D-glucose = [(1-&gt;4)-beta-D-glucosyl](n+1) + UDP + H(+). Its pathway is glycan metabolism; bacterial cellulose biosynthesis. Functionally, bifunctional protein comprised of a catalytic subunit and a regulatory subunit. The catalytic subunit of cellulose synthase polymerizes uridine 5'-diphosphate glucose to cellulose in a processive way. The thick cellulosic mats generated by this enzyme probably provide a specialized protective environment to the bacterium. The regulatory subunit binds bis-(3'-5') cyclic diguanylic acid (c-di-GMP). The protein is Cellulose synthase 1 (acsAB) of Novacetimonas hansenii (Komagataeibacter hansenii).